Consider the following 458-residue polypeptide: Putative long chain fatty acid-CoA ligase VraA (458 aa).

The protein belongs to the ATP-dependent AMP-binding enzyme family.

This chain is Putative long chain fatty acid-CoA ligase VraA (vraA), found in Staphylococcus aureus (strain MRSA252).